A 214-amino-acid polypeptide reads, in one-letter code: Probable chorismate pyruvate-lyase (214 aa).

The substrate site is built by R74, L112, and E173. The disordered stretch occupies residues 183–214 (AAPENTGAGGTRLPRRIDTHHTPSKQEERPES). The segment covering 197 to 214 (RRIDTHHTPSKQEERPES) has biased composition (basic and acidic residues).

Belongs to the UbiC family.

Its subcellular location is the cytoplasm. It catalyses the reaction chorismate = 4-hydroxybenzoate + pyruvate. It participates in cofactor biosynthesis; ubiquinone biosynthesis. Functionally, removes the pyruvyl group from chorismate, with concomitant aromatization of the ring, to provide 4-hydroxybenzoate (4HB) for the ubiquinone pathway. The sequence is that of Probable chorismate pyruvate-lyase from Cupriavidus metallidurans (strain ATCC 43123 / DSM 2839 / NBRC 102507 / CH34) (Ralstonia metallidurans).